We begin with the raw amino-acid sequence, 303 residues long: Probable 5-dehydro-4-deoxyglucarate dehydratase (303 aa).

This sequence belongs to the DapA family.

It carries out the reaction 5-dehydro-4-deoxy-D-glucarate + H(+) = 2,5-dioxopentanoate + CO2 + H2O. The protein operates within carbohydrate acid metabolism; D-glucarate degradation; 2,5-dioxopentanoate from D-glucarate: step 2/2. This is Probable 5-dehydro-4-deoxyglucarate dehydratase from Pseudomonas putida (strain GB-1).